The chain runs to 120 residues: Large ribosomal subunit protein uL18 (120 aa).

Belongs to the universal ribosomal protein uL18 family. Part of the 50S ribosomal subunit; part of the 5S rRNA/L5/L18/L25 subcomplex. Contacts the 5S and 23S rRNAs.

This is one of the proteins that bind and probably mediate the attachment of the 5S RNA into the large ribosomal subunit, where it forms part of the central protuberance. The chain is Large ribosomal subunit protein uL18 from Chloroflexus aurantiacus (strain ATCC 29364 / DSM 637 / Y-400-fl).